Consider the following 366-residue polypeptide: DNA replication and repair protein RecF (366 aa).

ATP is bound at residue 30–37 (GDNGMGKT).

This sequence belongs to the RecF family.

The protein resides in the cytoplasm. In terms of biological role, the RecF protein is involved in DNA metabolism; it is required for DNA replication and normal SOS inducibility. RecF binds preferentially to single-stranded, linear DNA. It also seems to bind ATP. In Azobacteroides pseudotrichonymphae genomovar. CFP2, this protein is DNA replication and repair protein RecF.